Reading from the N-terminus, the 260-residue chain is Flap endonuclease Xni (260 aa).

Asp-109 contributes to the Mg(2+) binding site. In terms of domain architecture, 5'-3' exonuclease spans 165–259; sequence VKPSQLADYW…DIRFTGPNKA (95 aa). K(+) is bound by residues Leu-176, Pro-185, Val-187, and Ile-190. The segment at 189–194 is interaction with DNA; sequence GIGPKA.

It belongs to the Xni family. It depends on Mg(2+) as a cofactor. K(+) serves as cofactor.

Has flap endonuclease activity. During DNA replication, flap endonucleases cleave the 5'-overhanging flap structure that is generated by displacement synthesis when DNA polymerase encounters the 5'-end of a downstream Okazaki fragment. The chain is Flap endonuclease Xni from Vibrio parahaemolyticus serotype O3:K6 (strain RIMD 2210633).